Consider the following 249-residue polypeptide: Uridylate kinase (249 aa).

22–25 (KISG) contributes to the ATP binding site. Residues 30–35 (GTQGFG) form an involved in allosteric activation by GTP region. Gly64 is a UMP binding site. ATP is bound by residues Gly65 and Arg69. UMP is bound by residues Asp84 and 145-152 (TGNPYFTT). Asn173, Tyr179, and Asp182 together coordinate ATP.

This sequence belongs to the UMP kinase family. As to quaternary structure, homohexamer.

The protein resides in the cytoplasm. It catalyses the reaction UMP + ATP = UDP + ADP. The protein operates within pyrimidine metabolism; CTP biosynthesis via de novo pathway; UDP from UMP (UMPK route): step 1/1. Allosterically activated by GTP. Inhibited by UTP. Functionally, catalyzes the reversible phosphorylation of UMP to UDP. This is Uridylate kinase from Ruegeria sp. (strain TM1040) (Silicibacter sp.).